The following is a 589-amino-acid chain: ATP-dependent lipid A-core flippase (589 aa).

Transmembrane regions (helical) follow at residues 29–49 (LLLV…TGFL), 70–90 (WLPV…YITD), 157–177 (VIGA…TILV), 261–281 (MIGA…ALAG), and 283–303 (LTAG…PGLK). One can recognise an ABC transmembrane type-1 domain in the interval 32-314 (VAALIAALIE…LTNVQNMVQR (283 aa)). The ABC transporter domain occupies 346 to 582 (IEFRDVTARY…GGLYSHLHGM (237 aa)). An ATP-binding site is contributed by 380 to 387 (GRSGSGKS).

The protein belongs to the ABC transporter superfamily. Lipid exporter (TC 3.A.1.106) family. In terms of assembly, homodimer.

The protein localises to the cell inner membrane. The enzyme catalyses ATP + H2O + lipid A-core oligosaccharideSide 1 = ADP + phosphate + lipid A-core oligosaccharideSide 2.. Involved in lipopolysaccharide (LPS) biosynthesis. Translocates lipid A-core from the inner to the outer leaflet of the inner membrane. Transmembrane domains (TMD) form a pore in the inner membrane and the ATP-binding domain (NBD) is responsible for energy generation. This Xanthomonas oryzae pv. oryzae (strain MAFF 311018) protein is ATP-dependent lipid A-core flippase.